The chain runs to 160 residues: Small ribosomal subunit protein bS6 (160 aa).

This sequence belongs to the bacterial ribosomal protein bS6 family.

Binds together with bS18 to 16S ribosomal RNA. The chain is Small ribosomal subunit protein bS6 from Ureaplasma urealyticum serovar 10 (strain ATCC 33699 / Western).